Consider the following 1561-residue polypeptide: Synemin (1561 aa).

The segment at 1–10 is head; sequence MLSWRLQTGS. The interval 11-49 is coil 1A; that stretch reads EKAELQELNARLYDYVCRVRELERENLLLEEELRSRLSR. The segment at 11–320 is interaction with DMD and UTRN; the sequence is EKAELQELNA…YRALLEGESN (310 aa). Positions 11-322 constitute an IF rod domain; it reads EKAELQELNA…ALLEGESNPE (312 aa). The linker 1 stretch occupies residues 50–58; the sequence is EDRWAEDQA. Positions 59–163 are coil 1B; that stretch reads LYAEEARSLR…DLRARAASLT (105 aa). Residues 164–186 form a linker 12 region; that stretch reads MHFRARATSPAAPPPRLRDVHDS. Positions 187–300 are coil 2; it reads YALLVAESWR…LRDYQELLQV (114 aa). A tail region spans residues 301 to 1561; sequence KTGLSLEVAT…EEEEEGEGWF (1261 aa). 2 stretches are compositionally biased toward polar residues: residues 371–390 and 401–421; these read SSASYSNWPGHLDSQTTTAV and SRHSSSATTSGQQKPLEKTIS. Disordered stretches follow at residues 371-421, 549-574, and 591-637; these read SSAS…KTIS, DARKRESRHLRDEAREKEALKERSVK, and EVST…DSTT. Positions 601 to 624 are enriched in basic and acidic residues; it reads GRKDVSHSGGREAETKETRFRLDT. The segment covering 625 to 637 has biased composition (polar residues); sequence QDTASSLQSDSTT. Threonine 653 bears the Phosphothreonine mark. A phosphoserine mark is found at serine 655, serine 778, serine 780, serine 1044, serine 1049, serine 1077, serine 1087, serine 1179, and serine 1182. 2 disordered regions span residues 1033 to 1061 and 1075 to 1099; these read SVVRESLAKRSSPVPRSPDREDGEEVPAG and SPSGERDDAGQVSPSSDQRVTQGPV. Residues 1086–1099 are compositionally biased toward polar residues; sequence VSPSSDQRVTQGPV. An interaction with TLN1 and VCL region spans residues 1152–1453; sequence VSGDFSEAVS…GPKETSFTFQ (302 aa). The interval 1212-1231 is disordered; the sequence is ADISGSGRMPGSERSHTEKE. The span at 1222 to 1231 shows a compositional bias: basic and acidic residues; the sequence is GSERSHTEKE. An interaction with DMD and UTRN region spans residues 1242 to 1557; the sequence is AQVGGNFATE…DNEEEEEEEG (316 aa). A Phosphoserine modification is found at serine 1425. Arginine 1481 is subject to Omega-N-methylarginine. A disordered region spans residues 1491–1519; it reads DERVASTGSGASPGDAHQAPGEKGTEQAG.

It belongs to the intermediate filament family. As to quaternary structure, interacts with DES, DMD, DTNA, TLN1, UTRN and VCL. Isoform 1 and isoform 2 interact with GFAP and VIM. Isoform 2 and isoform 3 are detected in adult skeletal muscle, heart and bladder, whereas isoform 1 is only detected in adult bladder (at protein level).

The protein localises to the cytoplasm. The protein resides in the cytoskeleton. Its subcellular location is the cell junction. It localises to the adherens junction. In terms of biological role, type-VI intermediate filament (IF) which plays an important cytoskeletal role within the muscle cell cytoskeleton. It forms heteromeric IFs with desmin and/or vimentin, and via its interaction with cytoskeletal proteins alpha-dystrobrevin, dystrophin, talin-1, utrophin and vinculin, is able to link these heteromeric IFs to adherens-type junctions, such as to the costameres, neuromuscular junctions, and myotendinous junctions within striated muscle cells. The polypeptide is Synemin (Mus musculus (Mouse)).